A 292-amino-acid polypeptide reads, in one-letter code: Probable 2-(5''-triphosphoribosyl)-3'-dephosphocoenzyme-A synthase (292 aa).

This sequence belongs to the CitG/MdcB family.

The catalysed reaction is 3'-dephospho-CoA + ATP = 2'-(5''-triphospho-alpha-D-ribosyl)-3'-dephospho-CoA + adenine. In Shigella flexneri, this protein is Probable 2-(5''-triphosphoribosyl)-3'-dephosphocoenzyme-A synthase.